The chain runs to 173 residues: Mediator of RNA polymerase II transcription subunit 10 (173 aa).

Residues 1-20 (MDPNSPMFQNTPQQPMSLQR) show a composition bias toward polar residues. The interval 1 to 45 (MDPNSPMFQNTPQQPMSLQRSVDDRIDRERTAKKEKDDEKKKQED) is disordered. Over residues 21–45 (SVDDRIDRERTAKKEKDDEKKKQED) the composition is skewed to basic and acidic residues.

The protein belongs to the Mediator complex subunit 10 family. In terms of assembly, component of the Mediator complex.

Its subcellular location is the nucleus. Its function is as follows. Component of the Mediator complex, a coactivator involved in the regulated transcription of nearly all RNA polymerase II-dependent genes. Mediator functions as a bridge to convey information from gene-specific regulatory proteins to the basal RNA polymerase II transcription machinery. Mediator is recruited to promoters by direct interactions with regulatory proteins and serves as a scaffold for the assembly of a functional preinitiation complex with RNA polymerase II and the general transcription factors. The sequence is that of Mediator of RNA polymerase II transcription subunit 10 (mdt-10) from Caenorhabditis briggsae.